The primary structure comprises 358 residues: Core-capsid bridging protein (358 aa).

The disordered stretch occupies residues 296–331 (PSITPTPGYRGTTFKPSRTRSTRRRRSVRRRSRRTA). A compositionally biased stretch (basic residues) spans 312 to 329 (SRTRSTRRRRSVRRRSRR).

This sequence belongs to the adenoviridae core-capsid bridging protein family. As to quaternary structure, monomer. Homodimer. Exists in equilibrium between monomers and dimers in solution. Interacts with the histone-like nucleoprotein; this interactions bridge the virus core to the capsid. Interacts with core protein X; this interactions bridge the virus core to the capsid. Interacts with the endosome lysis protein VI; this interactions bridge the virus core to the capsid. Interacts with the peripentonal hexons. Interacts with host NPM1; this interaction might play a role in virus assembly.

It localises to the virion. Its subcellular location is the host nucleus. The protein resides in the host nucleolus. In terms of biological role, associates loosely with the viral DNA to form an outer shell around the nucleoprotein-DNA complex and links it with the capsid by binding the endosome lysis protein. Dissociates from the viral genome during entry. Might be involved in nuclear capsid assembly of the viral particles through its association with NPM1/nucleophosmin. The chain is Core-capsid bridging protein from Human adenovirus F serotype 40 (HAdV-40).